A 344-amino-acid polypeptide reads, in one-letter code: MSERKVMTVLNGKTVTPPPIWLMRQAGRYLPEYRETRKSAGSFLDLCYNPELASEVTLQPIRRFGLDAAILFSDILVIPDALHRNVSFSEGKGPAMDPIDISGIEKLDASDVMAHLSPVFETVSRLRTSLPDETTLLGFCGAPWTVATYMIAGHGTPDQAPARLFGYQEPAAMEKLLALLAEVSADYLVAQIDAGADAVQIFDSWAGVLGEKEFEEYAIKPVARIIASVRARRPSAKIIAFAKGAGYLLRDYRRKTGANAIGLDWSVPLSFARDLQKEGPVQGNLDPMLMVAGGKALQDGIDAVLQSLGQGPLIFNLGHGITPQADPENVTRLVQRVRSVGGAG.

Residues 24-28 (RQAGR), phenylalanine 43, aspartate 74, tyrosine 149, serine 204, and histidine 319 each bind substrate.

Belongs to the uroporphyrinogen decarboxylase family. In terms of assembly, homodimer.

Its subcellular location is the cytoplasm. The catalysed reaction is uroporphyrinogen III + 4 H(+) = coproporphyrinogen III + 4 CO2. It functions in the pathway porphyrin-containing compound metabolism; protoporphyrin-IX biosynthesis; coproporphyrinogen-III from 5-aminolevulinate: step 4/4. Functionally, catalyzes the decarboxylation of four acetate groups of uroporphyrinogen-III to yield coproporphyrinogen-III. This is Uroporphyrinogen decarboxylase from Agrobacterium fabrum (strain C58 / ATCC 33970) (Agrobacterium tumefaciens (strain C58)).